A 138-amino-acid chain; its full sequence is Thyrotropin subunit beta (138 aa).

The first 20 residues, 1–20 (MTAIYLMSMLFGLACGQAMS), serve as a signal peptide directing secretion. 6 disulfide bridges follow: cysteine 22–cysteine 72, cysteine 36–cysteine 87, cysteine 39–cysteine 125, cysteine 47–cysteine 103, cysteine 51–cysteine 105, and cysteine 108–cysteine 115. N-linked (GlcNAc...) asparagine glycosylation is present at asparagine 43. Positions 133-138 (VVGFSI) are excised as a propeptide.

Belongs to the glycoprotein hormones subunit beta family. In terms of assembly, heterodimer of a common alpha chain and a unique beta chain which confers biological specificity to thyrotropin, lutropin, follitropin and gonadotropin.

It is found in the secreted. In terms of biological role, indispensable for the control of thyroid structure and metabolism. In Canis lupus familiaris (Dog), this protein is Thyrotropin subunit beta (TSHB).